A 1036-amino-acid polypeptide reads, in one-letter code: Ephrin type-A receptor 6 (1036 aa).

The signal sequence occupies residues 1 to 22 (MGGCEVREFLLQFGFFLPLLTA). Residues 23 to 550 (WPGDCSHVSN…MAAEQGQILV (528 aa)) lie on the Extracellular side of the membrane. Positions 34-212 (QVVLLDTTTV…FYKKCPFTVR (179 aa)) constitute an Eph LBD domain. 2 consecutive Fibronectin type-III domains span residues 331 to 441 (PPSA…TDQD) and 442 to 537 (APSL…TGDE). 3 N-linked (GlcNAc...) asparagine glycosylation sites follow: Asn343, Asn397, and Asn410. The helical transmembrane segment at 551-571 (IATAAVGGFTLLVILTLFFLI) threads the bilayer. The Cytoplasmic segment spans residues 572–1036 (TGRCQWYIKA…MHIQEKGFHV (465 aa)). Phosphotyrosine; by autocatalysis is present on residues Tyr606 and Tyr612. The Protein kinase domain occupies 631-944 (IRIERVIGAG…RNPSALHTLV (314 aa)). Residues 637–645 (IGAGEFGEV) and Lys663 each bind ATP. Asp798 acts as the Proton acceptor in catalysis. 2 positions are modified to phosphotyrosine; by autocatalysis: Tyr831 and Tyr978. An SAM domain is found at 961–1025 (PLFVTVGDWL…VSSIQTLRLH (65 aa)). The short motif at 1034-1036 (FHV) is the PDZ-binding element.

It belongs to the protein kinase superfamily. Tyr protein kinase family. Ephrin receptor subfamily. Heterotetramer upon binding of the ligand. The heterotetramer is composed of an ephrin dimer and a receptor dimer. Oligomerization is probably required to induce biological responses. Interacts (via SAM domain) with ANKS1A (via SAM domain). As to expression, expressed in brain and testis.

It is found in the membrane. The enzyme catalyses L-tyrosyl-[protein] + ATP = O-phospho-L-tyrosyl-[protein] + ADP + H(+). Functionally, receptor tyrosine kinase which binds promiscuously GPI-anchored ephrin-A family ligands residing on adjacent cells, leading to contact-dependent bidirectional signaling into neighboring cells. The signaling pathway downstream of the receptor is referred to as forward signaling while the signaling pathway downstream of the ephrin ligand is referred to as reverse signaling. The polypeptide is Ephrin type-A receptor 6 (EPHA6) (Homo sapiens (Human)).